A 449-amino-acid chain; its full sequence is MWTALVLIWIFSLSLSESHAASNDPRNFVPNKMWKGLVKRNASVETVDNKTSEDVTMAAASPVTLTKGTSAAHLNSMEVTTEDTSRTDVSEPATSGGAADGVTSIAPTAVASSTTAASITTAASSMTVASSAPTTAASSTTVASIAPTTAASSMTAASSTPMTLALPAPTSTSTGRTPSTTATGHPSLSTALAQVPKSSALPRTATLATLATRAQTVATTANTSSPMSTRPSPSKHMPSDTAASPVPPMRPQAQGPISQVSVDQPVVNTTNKSTPMPSNTTPEPAPTPTVVTTTKAQAREPTASPVPVPHTSPIPEMEAMSPTTQPSPMPYTQRAAGPGTSQAPEQVETEATPGTDSTGPTPRSSGGTKMPATDSCQPSTQGQYMVVTTEPLTQAVVDKTLLLVVLLLGVTLFITVLVLFALQAYESYKKKDYTQVDYLINGMYADSEM.

A signal peptide spans 1–20 (MWTALVLIWIFSLSLSESHA). The Extracellular segment spans residues 21–400 (ASNDPRNFVP…PLTQAVVDKT (380 aa)). N-linked (GlcNAc...) asparagine glycosylation is present at Asn-49. Disordered stretches follow at residues 72 to 101 (AHLNSMEVTTEDTSRTDVSEPATSGGAADG), 154 to 187 (MTAASSTPMTLALPAPTSTSTGRTPSTTATGHPS), and 215 to 381 (QTVA…PSTQ). Composition is skewed to low complexity over residues 154–184 (MTAASSTPMTLALPAPTSTSTGRTPSTTATG) and 215–234 (QTVATTANTSSPMSTRPSPS). Composition is skewed to polar residues over residues 255 to 279 (GPISQVSVDQPVVNTTNKSTPMPSN) and 352 to 367 (TPGTDSTGPTPRSSGG). Residues 401-421 (LLLVVLLLGVTLFITVLVLFA) traverse the membrane as a helical segment. Residues 422–449 (LQAYESYKKKDYTQVDYLINGMYADSEM) lie on the Cytoplasmic side of the membrane.

In terms of tissue distribution, highest expression in heart, placenta, liver, pancreas and colon. Also detected in brain, lung, skeletal muscle, kidney, spleen, prostate, testis, ovary and small intestine. Lowest expression in thymus and leukocytes.

The protein localises to the cell membrane. It is found in the golgi apparatus. The protein resides in the trans-Golgi network membrane. This is an uncharacterized protein from Homo sapiens (Human).